The primary structure comprises 183 residues: Large ribosomal subunit protein uL5 (183 aa).

Belongs to the universal ribosomal protein uL5 family. Part of the 50S ribosomal subunit; contacts the 5S rRNA and probably tRNA. Forms a bridge to the 30S subunit in the 70S ribosome.

In terms of biological role, this is one of the proteins that bind and probably mediate the attachment of the 5S RNA into the large ribosomal subunit, where it forms part of the central protuberance. In the 70S ribosome it contacts protein S13 of the 30S subunit (bridge B1b), connecting the 2 subunits; this bridge is implicated in subunit movement. May contact the P site tRNA; the 5S rRNA and some of its associated proteins might help stabilize positioning of ribosome-bound tRNAs. This chain is Large ribosomal subunit protein uL5, found in Thermococcus kodakarensis (strain ATCC BAA-918 / JCM 12380 / KOD1) (Pyrococcus kodakaraensis (strain KOD1)).